Reading from the N-terminus, the 465-residue chain is Glutamate--tRNA ligase (465 aa).

Positions 5 to 15 (PSPTGMFHVGG) match the 'HIGH' region motif. Positions 96, 98, 118, and 120 each coordinate Zn(2+). The 'KMSKS' region motif lies at 228–232 (KLSKR). ATP is bound at residue Lys231.

Belongs to the class-I aminoacyl-tRNA synthetase family. Glutamate--tRNA ligase type 1 subfamily. As to quaternary structure, monomer. Zn(2+) serves as cofactor.

It is found in the cytoplasm. It carries out the reaction tRNA(Glu) + L-glutamate + ATP = L-glutamyl-tRNA(Glu) + AMP + diphosphate. Its function is as follows. Catalyzes the attachment of glutamate to tRNA(Glu) in a two-step reaction: glutamate is first activated by ATP to form Glu-AMP and then transferred to the acceptor end of tRNA(Glu). This chain is Glutamate--tRNA ligase, found in Salinispora tropica (strain ATCC BAA-916 / DSM 44818 / JCM 13857 / NBRC 105044 / CNB-440).